The chain runs to 197 residues: Probable nicotinate-nucleotide adenylyltransferase (197 aa).

It belongs to the NadD family.

It carries out the reaction nicotinate beta-D-ribonucleotide + ATP + H(+) = deamido-NAD(+) + diphosphate. Its pathway is cofactor biosynthesis; NAD(+) biosynthesis; deamido-NAD(+) from nicotinate D-ribonucleotide: step 1/1. Its function is as follows. Catalyzes the reversible adenylation of nicotinate mononucleotide (NaMN) to nicotinic acid adenine dinucleotide (NaAD). The protein is Probable nicotinate-nucleotide adenylyltransferase of Borrelia garinii subsp. bavariensis (strain ATCC BAA-2496 / DSM 23469 / PBi) (Borreliella bavariensis).